The primary structure comprises 120 residues: Large ribosomal subunit protein uL18 (120 aa).

This sequence belongs to the universal ribosomal protein uL18 family. Part of the 50S ribosomal subunit; part of the 5S rRNA/L5/L18/L25 subcomplex. Contacts the 5S and 23S rRNAs.

This is one of the proteins that bind and probably mediate the attachment of the 5S RNA into the large ribosomal subunit, where it forms part of the central protuberance. The sequence is that of Large ribosomal subunit protein uL18 from Synechococcus elongatus (strain ATCC 33912 / PCC 7942 / FACHB-805) (Anacystis nidulans R2).